We begin with the raw amino-acid sequence, 489 residues long: ATP-dependent zinc metalloprotease FtsH 3 (489 aa).

Residues 1–14 (MNPRPVRPGGSLQQ) are Cytoplasmic-facing. The helical transmembrane segment at 15–31 (SLLALGSLSVAVGLAVW) threads the bilayer. At 32–489 (QQRTLGRGRS…GPRPARPAMN (458 aa)) the chain is on the extracellular side. 95–102 (GPPGTGKT) provides a ligand contact to ATP. H315 is a binding site for Zn(2+). E316 is a catalytic residue. Positions 319 and 391 each coordinate Zn(2+).

It in the central section; belongs to the AAA ATPase family. In the C-terminal section; belongs to the peptidase M41 family. In terms of assembly, homohexamer. It depends on Zn(2+) as a cofactor.

The protein resides in the cell membrane. Acts as a processive, ATP-dependent zinc metallopeptidase for both cytoplasmic and membrane proteins. Plays a role in the quality control of integral membrane proteins. This Sphaerobacter thermophilus (strain ATCC 49802 / DSM 20745 / KCCM 41009 / NCIMB 13125 / S 6022) protein is ATP-dependent zinc metalloprotease FtsH 3.